We begin with the raw amino-acid sequence, 441 residues long: Protein translocase subunit SecY (441 aa).

The next 10 helical transmembrane spans lie at 24-44 (LFVL…VPGI), 77-97 (ILAL…LLAT), 123-143 (ATVV…PNML), 152-172 (FSFY…LMWL), 181-201 (IGNG…PSAI), 215-235 (PLVL…VVFV), 272-292 (VMPA…TQWF), 313-333 (PLYL…YTAM), 373-393 (LIGG…TSAW), and 397-417 (FYFG…FIVQ).

This sequence belongs to the SecY/SEC61-alpha family. In terms of assembly, component of the Sec protein translocase complex. Heterotrimer consisting of SecY, SecE and SecG subunits. The heterotrimers can form oligomers, although 1 heterotrimer is thought to be able to translocate proteins. Interacts with the ribosome. Interacts with SecDF, and other proteins may be involved. Interacts with SecA.

It localises to the cell inner membrane. In terms of biological role, the central subunit of the protein translocation channel SecYEG. Consists of two halves formed by TMs 1-5 and 6-10. These two domains form a lateral gate at the front which open onto the bilayer between TMs 2 and 7, and are clamped together by SecE at the back. The channel is closed by both a pore ring composed of hydrophobic SecY resides and a short helix (helix 2A) on the extracellular side of the membrane which forms a plug. The plug probably moves laterally to allow the channel to open. The ring and the pore may move independently. The sequence is that of Protein translocase subunit SecY from Haemophilus influenzae (strain ATCC 51907 / DSM 11121 / KW20 / Rd).